The following is a 207-amino-acid chain: MQIGLDFNLVEDLVAGVDEVGRGPLCGAVVTAAVILDPARPILGLNDSKKLTEARREALFDEICEKALSFCIARAEVEEIDSLNILQATMLAMQRAVEGLHITPKLALIDGNRCPKLAVPAAPVVKGDSQVPAIAAASILAKVTRDREMSAFELIYPGYGIGGHKGYPTPVHLEALARLGPTPIHRRSFAPVRAAWEVREGVTDSLI.

An RNase H type-2 domain is found at 12–201 (DLVAGVDEVG…VRAAWEVREG (190 aa)). Residues aspartate 18, glutamate 19, and aspartate 110 each contribute to the a divalent metal cation site.

Belongs to the RNase HII family. Mn(2+) is required as a cofactor. It depends on Mg(2+) as a cofactor.

Its subcellular location is the cytoplasm. It catalyses the reaction Endonucleolytic cleavage to 5'-phosphomonoester.. Endonuclease that specifically degrades the RNA of RNA-DNA hybrids. The protein is Ribonuclease HII of Pseudomonas putida (strain ATCC 700007 / DSM 6899 / JCM 31910 / BCRC 17059 / LMG 24140 / F1).